Reading from the N-terminus, the 54-residue chain is Lectin alpha-1 chain (54 aa).

It belongs to the leguminous lectin family. Tetramer of two alpha and two beta chains.

This is Lectin alpha-1 chain from Lathyrus cicera (Flat-pod pea).